The following is a 992-amino-acid chain: Epstein-Barr nuclear antigen 6 (992 aa).

The disordered stretch occupies residues methionine 1–methionine 70. Basic and acidic residues predominate over residues glutamine 12–aspartate 31. An interaction with host PIM1 region spans residues leucine 130 to proline 159. 3 disordered regions span residues alanine 355–alanine 905, proline 931–cysteine 954, and aspartate 967–aspartate 992. Positions valine 381–proline 391 are enriched in acidic residues. Positions alanine 445–threonine 461 are enriched in polar residues. A compositionally biased stretch (pro residues) spans glutamine 479–proline 495. The segment covering tyrosine 506–glutamate 520 has biased composition (acidic residues). One copy of the 1-1; approximate repeat lies at proline 551–serine 555. The 12 X 5 AA approximate tandem repeats of P-P-A-A-G stretch occupies residues proline 551 to glycine 610. The stretch at proline 556 to glycine 560 is one 2-1; approximate repeat. A 3-1; approximate repeat occupies proline 561–glycine 565. Over residues alanine 563–alanine 594 the composition is skewed to pro residues. Repeat copies occupy residues proline 566–glycine 570, proline 571–glycine 575, proline 576–glycine 580, proline 581–glycine 585, proline 586–glycine 590, and proline 591–glycine 595. Residues glycine 595–proline 611 show a composition bias toward low complexity. Residues proline 596–alanine 600 form a 10-1; approximate repeat. Residues proline 601–glycine 605 form an 11-1; approximate repeat. The 12-1 repeat unit spans residues proline 606–glycine 610. Polar residues-rich tracts occupy residues threonine 659–threonine 676 and isoleucine 700–isoleucine 714. Basic and acidic residues predominate over residues serine 715–aspartate 724. 2 stretches are compositionally biased toward low complexity: residues alanine 738–glutamine 764 and proline 772–alanine 781. A run of 3 repeats spans residues proline 741–proline 753, proline 754–proline 766, and proline 767–proline 779. The 3 X 13 AA tandem repeats of P-[AP]-P-Q-A-P-Y-Q-G-Y-Q-E-P stretch occupies residues proline 741 to proline 779. Residues aspartate 845 to threonine 857 show a composition bias toward polar residues. The segment covering proline 859 to glutamine 881 has biased composition (low complexity). Residues proline 882–proline 899 show a composition bias toward pro residues.

It belongs to the herpesviridae EBNA-6 family. Interacts with host CTPB1; this interaction leads to gene repression, but also seems to interfere with the repressive function of CtBP pre-bound to DNA, leading to EBNA6 mediated up-regulation of many host genes. Interacts with host MYC; this interaction enhances MYC stability. Interacts (via N-terminus) with host RBPJ. Interacts (via N-terminus) with host histone H2AX; this interaction facilitates H2AX proteasomal degradation. Interacts with host TP73; this interaction inhibits TP73-mediated apoptotic pathway. Interacts (via N-terminus) with host PIM1; this interaction upregulates and stabilizes PIM1 and induces cell proliferation by inhibiting the growth suppressive properties of p21.

It is found in the host nucleus. The protein resides in the host nucleus matrix. Plays an essential role for the activation and immortalization of human B-cells. Represses transcription of viral promoters TP1 and Cp through interaction with host RBPJ, and inhibits EBNA2-mediated activation of these promoters. Targets host chromatin through interactions with host transcription factors, especially RBPJ and IRF4. Alternatively, EBNA6 also regulates the transcription of the EBV oncogene LMP1 in a cell cycle-dependent manner. Modulates the activity of several host proteins involved in cell cycle regulation including host cyclin A, MYC, RB, p21 and p27 mainly through binding to the host SCF(SKP2) complex. Inhibits the promoter of host H2AX and targets H2AX to proteasomal degradation in order to promote latency and cell proliferation. Upregulates host PIM1 expression and stabilization. Potentiates PIM1 to promote cell proliferation by inhibiting the growth suppressive properties of p21. This Epstein-Barr virus (strain B95-8) (HHV-4) protein is Epstein-Barr nuclear antigen 6 (EBNA6).